We begin with the raw amino-acid sequence, 189 residues long: ATP synthase subunit b (189 aa).

Residues 35–54 (LLAQMFNFLVLLILLRAVAY) traverse the membrane as a helical segment.

This sequence belongs to the ATPase B chain family. F-type ATPases have 2 components, F(1) - the catalytic core - and F(0) - the membrane proton channel. F(1) has five subunits: alpha(3), beta(3), gamma(1), delta(1), epsilon(1). F(0) has three main subunits: a(1), b(2) and c(10-14). The alpha and beta chains form an alternating ring which encloses part of the gamma chain. F(1) is attached to F(0) by a central stalk formed by the gamma and epsilon chains, while a peripheral stalk is formed by the delta and b chains.

It is found in the cell membrane. Functionally, f(1)F(0) ATP synthase produces ATP from ADP in the presence of a proton or sodium gradient. F-type ATPases consist of two structural domains, F(1) containing the extramembraneous catalytic core and F(0) containing the membrane proton channel, linked together by a central stalk and a peripheral stalk. During catalysis, ATP synthesis in the catalytic domain of F(1) is coupled via a rotary mechanism of the central stalk subunits to proton translocation. Its function is as follows. Component of the F(0) channel, it forms part of the peripheral stalk, linking F(1) to F(0). This is ATP synthase subunit b from Desulforamulus reducens (strain ATCC BAA-1160 / DSM 100696 / MI-1) (Desulfotomaculum reducens).